The following is a 162-amino-acid chain: Protein S40-4 (162 aa).

This sequence belongs to the senescence regulator S40 family.

The protein localises to the cytoplasm. The sequence is that of Protein S40-4 from Arabidopsis thaliana (Mouse-ear cress).